Reading from the N-terminus, the 89-residue chain is Gallinacin-13 (89 aa).

An N-terminal signal peptide occupies residues 1 to 23; sequence MRILQLLFAIVVILLLQDAPARG. 3 disulfide bridges follow: Cys-30-Cys-58, Cys-37-Cys-51, and Cys-41-Cys-59. The disordered stretch occupies residues 66-89; the sequence is PFSNPKHSVLHTAEQDPSPSLGGT.

It belongs to the beta-defensin family. Expressed in the liver, gall bladder, kidney, small intestine, spleen, testis, ovary and male and female reproductive tracts. Not detected in the ovarian stroma and the theca and granulosa layers of the ovarian follicle.

It localises to the secreted. It is found in the cytoplasmic granule. Its function is as follows. Has bactericidal activity. Potent activity against E.coli, L.monocytogenes, S.typhimurium and S.pyogenes but mot against S.aureus. In terms of biological role, has bactericidal activity. This Gallus gallus (Chicken) protein is Gallinacin-13 (GAL13).